We begin with the raw amino-acid sequence, 338 residues long: CDP-paratose 2-epimerase (338 aa).

Thr-124 is a binding site for substrate. Catalysis depends on Tyr-164, which acts as the Proton acceptor.

It belongs to the NAD(P)-dependent epimerase/dehydratase family. As to quaternary structure, homotetramer. The cofactor is NAD(+).

The catalysed reaction is CDP-alpha-D-paratose = CDP-3,6-dideoxy-alpha-D-mannose. The protein operates within nucleotide-sugar biosynthesis; CDP-3,6-dideoxy-D-mannose biosynthesis; CDP-3,6-dideoxy-D-mannose from CTP and alpha-D-glucose 1-phosphate: step 5/5. Functionally, catalyzes the isomeration of CDP-paratose to CDP-tyvelose. The protein is CDP-paratose 2-epimerase (rfbE) of Salmonella typhi.